A 100-amino-acid polypeptide reads, in one-letter code: Urease subunit gamma (100 aa).

Belongs to the urease gamma subunit family. In terms of assembly, heterotrimer of UreA (gamma), UreB (beta) and UreC (alpha) subunits. Three heterotrimers associate to form the active enzyme.

It is found in the cytoplasm. It catalyses the reaction urea + 2 H2O + H(+) = hydrogencarbonate + 2 NH4(+). It functions in the pathway nitrogen metabolism; urea degradation; CO(2) and NH(3) from urea (urease route): step 1/1. The protein is Urease subunit gamma of Pseudomonas aeruginosa (strain UCBPP-PA14).